We begin with the raw amino-acid sequence, 412 residues long: Major facilitator superfamily domain-containing protein 3 (412 aa).

12 helical membrane-spanning segments follow: residues 10–30 (GLYLVQGLPYGLQSGLLPVLL), 40–60 (VGLAKVLYAPWLLKLAWAPLV), 73–93 (STAGLGLVCGLLAGLPPPGAG), 94–114 (QAGLPAAVAGLLLLLNLGAAM), 138–158 (VQVVAYKLGAALAGGALLALL), 166–186 (LFLLLAATYWLAAALAWAAPA), 209–229 (VLAVPGTVWTAGFVLTYKLGE), 250–270 (LGLWNGVGAVVCSIAGSSLGG), 291–311 (LGGLACQTALVFHLDTLGASM), 321–341 (ALLSLCLQHFLGGLVTTVTFT), 361–381 (LLATLELLGKLLLGTLAGGLA), and 384–404 (LGPHPCFLLLLILSAFPVLYL).

This sequence belongs to the major facilitator superfamily.

The protein localises to the membrane. This Homo sapiens (Human) protein is Major facilitator superfamily domain-containing protein 3 (MFSD3).